The following is a 504-amino-acid chain: Acetylcholine receptor subunit epsilon (504 aa).

The signal sequence occupies residues 1–19; the sequence is MESGVRILSLLILLHNSLA. Topologically, residues 20–240 are extracellular; the sequence is SESEESRLIK…IVFNLIIQRK (221 aa). Asparagine 88 and asparagine 161 each carry an N-linked (GlcNAc...) asparagine glycan. An intrachain disulfide couples cysteine 148 to cysteine 162. A helical transmembrane segment spans residues 241–265; the sequence is PLFYIINIIVPCVLISFLVVLVYFL. The Cytoplasmic segment spans residues 266–273; the sequence is PAKAGGQK. The chain crosses the membrane as a helical span at residues 274–292; that stretch reads CTVSISVLLAQTVFLFLIA. At 293 to 307 the chain is on the extracellular side; sequence QMVPETSLSVPLIGK. Residues 308–329 form a helical membrane-spanning segment; that stretch reads YLMFVMFVSTLIVLSCVIVLNV. Residues 330 to 473 lie on the Cytoplasmic side of the membrane; it reads SLRSPSTHNL…WILIGKVLDV (144 aa). Residues 474–497 form a helical membrane-spanning segment; sequence LCFWVALPLFVLGTLAIFLMGHFN. At 498–504 the chain is on the extracellular side; it reads TAPEHPF.

This sequence belongs to the ligand-gated ion channel (TC 1.A.9) family. Acetylcholine receptor (TC 1.A.9.1) subfamily. Epsilon/CHRNE sub-subfamily. As to quaternary structure, pentamer of two alpha chains, and one each of the beta, delta, and gamma (in immature muscle) or epsilon (in mature muscle) chains.

The protein localises to the postsynaptic cell membrane. Its subcellular location is the cell membrane. The catalysed reaction is K(+)(in) = K(+)(out). It catalyses the reaction Na(+)(in) = Na(+)(out). Its function is as follows. After binding acetylcholine, the AChR responds by an extensive change in conformation that affects all subunits and leads to opening of an ion-conducting channel across the plasma membrane. In Xenopus laevis (African clawed frog), this protein is Acetylcholine receptor subunit epsilon (chrne).